The sequence spans 159 residues: Phosphopantetheine adenylyltransferase (159 aa).

T10 lines the substrate pocket. ATP contacts are provided by residues 10 to 11 (TF) and H18. The substrate site is built by K42, M74, and R88. Residues 89-91 (GLR), E99, and 124-130 (WSFISSS) contribute to the ATP site.

The protein belongs to the bacterial CoaD family. In terms of assembly, homohexamer. Mg(2+) is required as a cofactor.

The protein resides in the cytoplasm. The enzyme catalyses (R)-4'-phosphopantetheine + ATP + H(+) = 3'-dephospho-CoA + diphosphate. It functions in the pathway cofactor biosynthesis; coenzyme A biosynthesis; CoA from (R)-pantothenate: step 4/5. In terms of biological role, reversibly transfers an adenylyl group from ATP to 4'-phosphopantetheine, yielding dephospho-CoA (dPCoA) and pyrophosphate. The chain is Phosphopantetheine adenylyltransferase from Escherichia fergusonii (strain ATCC 35469 / DSM 13698 / CCUG 18766 / IAM 14443 / JCM 21226 / LMG 7866 / NBRC 102419 / NCTC 12128 / CDC 0568-73).